The following is a 322-amino-acid chain: Transmembrane protein 171 (322 aa).

4 helical membrane passes run 22-42 (IFFL…LSIF), 57-77 (IVLK…VILA), 112-132 (LIFG…GIWV), and 159-179 (FLSL…FFVV). Residues 223–322 (PPPYFPESSA…LGAPSDASPP (100 aa)) form a disordered region. Residues 228 to 241 (PESSAAAPSPGANS) are compositionally biased toward low complexity. Composition is skewed to polar residues over residues 242 to 267 (LHQI…NQGA) and 279 to 289 (ISGQGSSSERS).

The protein localises to the membrane. The sequence is that of Transmembrane protein 171 (Tmem171) from Mus musculus (Mouse).